The sequence spans 177 residues: Large ribosomal subunit protein uL6 (177 aa).

This sequence belongs to the universal ribosomal protein uL6 family. Part of the 50S ribosomal subunit.

This protein binds to the 23S rRNA, and is important in its secondary structure. It is located near the subunit interface in the base of the L7/L12 stalk, and near the tRNA binding site of the peptidyltransferase center. This is Large ribosomal subunit protein uL6 from Pseudomonas fluorescens (strain ATCC BAA-477 / NRRL B-23932 / Pf-5).